The sequence spans 131 residues: uncharacterized protein (131 aa).

A signal peptide spans 1-26 (MKKIVAAIVVIGLVFIAFFYLYSRSG).

This is an uncharacterized protein from Bacillus subtilis (strain 168).